Reading from the N-terminus, the 141-residue chain is Large ribosomal subunit protein uL11 (141 aa).

Belongs to the universal ribosomal protein uL11 family. Part of the ribosomal stalk of the 50S ribosomal subunit. Interacts with L10 and the large rRNA to form the base of the stalk. L10 forms an elongated spine to which L12 dimers bind in a sequential fashion forming a multimeric L10(L12)X complex. In terms of processing, one or more lysine residues are methylated.

In terms of biological role, forms part of the ribosomal stalk which helps the ribosome interact with GTP-bound translation factors. This is Large ribosomal subunit protein uL11 from Synechococcus sp. (strain CC9311).